Here is a 759-residue protein sequence, read N- to C-terminus: GTPase-activating protein rrc-1 (759 aa).

The 80-residue stretch at 164–243 (PAIAAAVVTK…PRDCVMLIDD (80 aa)) folds into the SH3 domain. Residues 280-473 (LELTDLYMRT…FFIENSESLF (194 aa)) form the Rho-GAP domain. Residues 591-624 (ARSMRPTSRPPPSPRTRRARFSNGSSNNVQKLNE) are disordered. The span at 612 to 622 (SNGSSNNVQKL) shows a compositional bias: polar residues.

As to expression, expressed in coelomocytes, excretory cells, uterine-seam cells and GLR cells.

Functionally, functions as a GTPase-activating protein (GAP) for ced-10/rac-1 and CDC42. This chain is GTPase-activating protein rrc-1 (rrc-1), found in Caenorhabditis elegans.